Consider the following 2353-residue polypeptide: Nonribosomal peptide synthetase 7 (2353 aa).

Residues 305 to 684 (TFSALNTRAN…AIEEVEDSAV (380 aa)) are adenylation 1. The 78-residue stretch at 776–853 (RDLTDSEKVV…QVAAAVQPQP (78 aa)) folds into the Carrier 1 domain. Ser813 carries the post-translational modification O-(pantetheine 4'-phosphoryl)serine. A condensation 1 region spans residues 885-1147 (EDAFPVTPFQ…LMVAPLRVKV (263 aa)). The tract at residues 1338-1725 (TYAGLAIKMN…QTNVFRQCAV (388 aa)) is adenylation 2. The Carrier 2 domain maps to 1826–1902 (EICSEAEREL…EQAALMVQGQ (77 aa)). O-(pantetheine 4'-phosphoryl)serine is present on Ser1863. Residues 1939 to 2214 (EDIYPCSPGQ…NGNCANFLPY (276 aa)) form a condensation 2 region.

This sequence belongs to the NRP synthetase family.

Nonribosomal peptide synthesis (NRPS) is a key mechanism responsible for the biosynthesis of bioactive metabolites which are potentially contributing to organismal virulence. This chain is Nonribosomal peptide synthetase 7 (NRPS7), found in Aspergillus fumigatus (strain ATCC MYA-4609 / CBS 101355 / FGSC A1100 / Af293) (Neosartorya fumigata).